The primary structure comprises 149 residues: Transcriptional repressor NrdR (149 aa).

A zinc finger spans residues 3–34 (CPFCFAVDTKVIDSRLVGEGSSVRRRRQCLVC). Residues 49 to 139 (PRVVKSNDVR…VYRSFEDIKE (91 aa)) enclose the ATP-cone domain.

The protein belongs to the NrdR family. Requires Zn(2+) as cofactor.

Functionally, negatively regulates transcription of bacterial ribonucleotide reductase nrd genes and operons by binding to NrdR-boxes. This Escherichia coli O139:H28 (strain E24377A / ETEC) protein is Transcriptional repressor NrdR.